Reading from the N-terminus, the 509-residue chain is Dihydrolipoyl dehydrogenase, mitochondrial (509 aa).

Residues 1-35 constitute a mitochondrion transit peptide; that stretch reads MQSWSRVYCSLAKRGHFSRISHGLQAVSAVPLRTY. K66 carries the post-translational modification N6-acetyllysine; alternate. At K66 the chain carries N6-succinyllysine; alternate. FAD-binding positions include 71-80 and K89; that span reads EKNETLGGTC. A disulfide bridge connects residues C80 and C85. An N6-acetyllysine; alternate mark is found at K104, K122, K132, and K143. 4 positions are modified to N6-succinyllysine; alternate: K104, K122, K132, and K143. An FAD-binding site is contributed by G154. Residues K159 and K166 each carry the N6-succinyllysine modification. 183–185 is a binding site for FAD; that stretch reads TGS. NAD(+) contacts are provided by residues 220–227 and E243; that span reads GAGVIGVE. Residues K273 and K277 each carry the N6-succinyllysine modification. V278 contacts NAD(+). Phosphoserine occurs at positions 285 and 297. G314 lines the NAD(+) pocket. N6-acetyllysine is present on K346. Residues D355 and 361–364 contribute to the FAD site; that span reads MLAH. K410 bears the N6-acetyllysine; alternate mark. K410 is subject to N6-succinyllysine; alternate. N6-acetyllysine occurs at positions 417 and 420. K430 is subject to N6-succinyllysine. H487 functions as the Proton acceptor in the catalytic mechanism. A Phosphoserine modification is found at S502. Position 505 is an N6-acetyllysine; alternate (K505). K505 carries the post-translational modification N6-succinyllysine; alternate.

This sequence belongs to the class-I pyridine nucleotide-disulfide oxidoreductase family. As to quaternary structure, homodimer. Part of the multimeric pyruvate dehydrogenase complex that contains multiple copies of pyruvate dehydrogenase (subunits PDHA (PDHA1 or PDHA2) and PDHB, E1), dihydrolipoamide acetyltransferase (DLAT, E2) and lipoamide dehydrogenase (DLD, E3). These subunits are bound to an inner core composed of about 48 DLAT and 12 PDHX molecules (by non covalent bonds). The 2-oxoglutarate dehydrogenase complex is composed of OGDH (2-oxoglutarate dehydrogenase; E1), DLST (dihydrolipoamide succinyltransferase; E2), DLD (dihydrolipoamide dehydrogenase; E3) and the assembly factor KGD4. It contains multiple copies of the three enzymatic components (E1, E2 and E3). In the nucleus, the 2-oxoglutarate dehydrogenase complex associates with KAT2A. Interacts with PDHX. The cofactor is FAD. Tyrosine phosphorylated.

Its subcellular location is the mitochondrion matrix. It localises to the nucleus. The protein resides in the cell projection. It is found in the cilium. The protein localises to the flagellum. Its subcellular location is the cytoplasmic vesicle. It localises to the secretory vesicle. The protein resides in the acrosome. The enzyme catalyses N(6)-[(R)-dihydrolipoyl]-L-lysyl-[protein] + NAD(+) = N(6)-[(R)-lipoyl]-L-lysyl-[protein] + NADH + H(+). In terms of biological role, lipoamide dehydrogenase is a component of the glycine cleavage system as well as an E3 component of three alpha-ketoacid dehydrogenase complexes (pyruvate-, alpha-ketoglutarate-, and branched-chain amino acid-dehydrogenase complex). The 2-oxoglutarate dehydrogenase complex is mainly active in the mitochondrion. A fraction of the 2-oxoglutarate dehydrogenase complex also localizes in the nucleus and is required for lysine succinylation of histones: associates with KAT2A on chromatin and provides succinyl-CoA to histone succinyltransferase KAT2A. In monomeric form may have additional moonlighting function as serine protease. Involved in the hyperactivation of spermatazoa during capacitation and in the spermatazoal acrosome reaction. The polypeptide is Dihydrolipoyl dehydrogenase, mitochondrial (DLD) (Canis lupus familiaris (Dog)).